Consider the following 510-residue polypeptide: MKTLLAVLLAACVLTQVLSAPSNEQRVRRNMIRGRPRGGMKKTPPMSSVSHMINFDNVVSSTFTQTLDHFDSSVGKTFQQRYYHNNQWYKAGGPAFLMLGGEGPESSYWVSYPGLEITNLAAKQGAWVFDIEHRFYGETHPTSDMSVPNLKYLSSAQAIEDAAAFIKAMTAKFPQLANAKWVTFGGSYSGALAAWTRAKHPELVYAAVGSSGPVQAEVDFKEYLEVVQNSITRNSTECAASVTQGFNLVASLLQTSDGRKQLKTAFHLCQDIQMDDKSLKYFWETVYSPYMEVVQYSGDAAGSFATQLTISHAICRYHINTKSTPLQKLKQVNDYFNQVSGYFGCNDIDYNGFISFMKDETFGEAQSDRAWVWQTCTEFGYYQSTSSATAGPWFGGVSNLPAQYYIDECTAIYGAAYNSQEVQTSVDYTNQYYGGRDNLNTDRILLPNGDIDPWHALGKLTSSNSNIVPVVINGTAHCADMYGASSLDSMYLTNARQRISDVLDGWLHAN.

An N-terminal signal peptide occupies residues 1-19; it reads MKTLLAVLLAACVLTQVLS. The Charge relay system role is filled by Ser187. Asn234 carries N-linked (GlcNAc...) asparagine glycosylation. Asp452 (charge relay system) is an active-site residue. Asn473 is a glycosylation site (N-linked (GlcNAc...) asparagine). His477 (charge relay system) is an active-site residue.

Belongs to the peptidase S28 family.

The polypeptide is Putative serine protease K12H4.7 (Caenorhabditis elegans).